The following is a 403-amino-acid chain: RNA-binding motif, single-stranded-interacting protein 1 (403 aa).

The tract at residues Pro30–Trp56 is disordered. Low complexity predominate over residues Ser40–Ser54. RRM domains follow at residues Thr62–Gln135 and Thr141–Gly226. The residue at position 208 (Thr208) is a Phosphothreonine.

Its subcellular location is the nucleus. Single-stranded DNA binding protein that interacts with the region upstream of the MYC gene. Binds specifically to the DNA sequence motif 5'-[AT]CT[AT][AT]T-3'. Probably has a role in DNA replication. The polypeptide is RNA-binding motif, single-stranded-interacting protein 1 (Rattus norvegicus (Rat)).